The chain runs to 419 residues: Serine hydroxymethyltransferase (419 aa).

(6S)-5,6,7,8-tetrahydrofolate contacts are provided by residues Leu121 and 125–127; that span reads GHL. Lys229 is modified (N6-(pyridoxal phosphate)lysine). 354–356 is a binding site for (6S)-5,6,7,8-tetrahydrofolate; sequence SPF.

Belongs to the SHMT family. In terms of assembly, homodimer. Requires pyridoxal 5'-phosphate as cofactor.

It localises to the cytoplasm. It carries out the reaction (6R)-5,10-methylene-5,6,7,8-tetrahydrofolate + glycine + H2O = (6S)-5,6,7,8-tetrahydrofolate + L-serine. It participates in one-carbon metabolism; tetrahydrofolate interconversion. Its pathway is amino-acid biosynthesis; glycine biosynthesis; glycine from L-serine: step 1/1. In terms of biological role, catalyzes the reversible interconversion of serine and glycine with tetrahydrofolate (THF) serving as the one-carbon carrier. This reaction serves as the major source of one-carbon groups required for the biosynthesis of purines, thymidylate, methionine, and other important biomolecules. Also exhibits THF-independent aldolase activity toward beta-hydroxyamino acids, producing glycine and aldehydes, via a retro-aldol mechanism. This is Serine hydroxymethyltransferase from Coxiella burnetii (strain RSA 493 / Nine Mile phase I).